A 256-amino-acid chain; its full sequence is NAD-dependent protein deacetylase (256 aa).

One can recognise a Deacetylase sirtuin-type domain in the interval 1-254; it reads MDISYHEKIS…KDILDVIKSE (254 aa). Residues Ala28, Thr32, Phe39, Arg40, Gln105, Ile107, Asp108, and His123 each contribute to the NAD(+) site. Phe39 serves as a coordination point for nicotinamide. Ile107 and Asp108 together coordinate nicotinamide. His123 acts as the Proton acceptor in catalysis. 4 residues coordinate Zn(2+): Cys131, Cys134, Cys156, and Cys159. Thr197, Ser198, and Asn222 together coordinate NAD(+).

It belongs to the sirtuin family. Class U subfamily. It depends on Zn(2+) as a cofactor.

It is found in the cytoplasm. The catalysed reaction is N(6)-acetyl-L-lysyl-[protein] + NAD(+) + H2O = 2''-O-acetyl-ADP-D-ribose + nicotinamide + L-lysyl-[protein]. Its function is as follows. NAD-dependent protein deacetylase which modulates the activities of several enzymes which are inactive in their acetylated form. The sequence is that of NAD-dependent protein deacetylase from Thermodesulfovibrio yellowstonii (strain ATCC 51303 / DSM 11347 / YP87).